Reading from the N-terminus, the 130-residue chain is 3-aminoacrylate deaminase RutC (130 aa).

It belongs to the RutC family.

It catalyses the reaction (Z)-3-aminoacrylate + H2O + H(+) = 3-oxopropanoate + NH4(+). Its function is as follows. Involved in pyrimidine catabolism. Catalyzes the deamination of 3-aminoacrylate to malonic semialdehyde, a reaction that can also occur spontaneously. RutC may facilitate the reaction and modulate the metabolic fitness, rather than catalyzing essential functions. The sequence is that of 3-aminoacrylate deaminase RutC from Klebsiella pneumoniae (strain 342).